The chain runs to 159 residues: 2-C-methyl-D-erythritol 2,4-cyclodiphosphate synthase (159 aa).

A divalent metal cation is bound by residues Asp9 and His11. 4-CDP-2-C-methyl-D-erythritol 2-phosphate contacts are provided by residues 9-11 and 35-36; these read DVH and HS. His43 provides a ligand contact to a divalent metal cation. 4-CDP-2-C-methyl-D-erythritol 2-phosphate-binding positions include 57–59, 62–66, 133–136, Phe140, and Arg143; these read DIG, FPDTD, and TTTE.

Belongs to the IspF family. In terms of assembly, homotrimer. The cofactor is a divalent metal cation.

The catalysed reaction is 4-CDP-2-C-methyl-D-erythritol 2-phosphate = 2-C-methyl-D-erythritol 2,4-cyclic diphosphate + CMP. The protein operates within isoprenoid biosynthesis; isopentenyl diphosphate biosynthesis via DXP pathway; isopentenyl diphosphate from 1-deoxy-D-xylulose 5-phosphate: step 4/6. Involved in the biosynthesis of isopentenyl diphosphate (IPP) and dimethylallyl diphosphate (DMAPP), two major building blocks of isoprenoid compounds. Catalyzes the conversion of 4-diphosphocytidyl-2-C-methyl-D-erythritol 2-phosphate (CDP-ME2P) to 2-C-methyl-D-erythritol 2,4-cyclodiphosphate (ME-CPP) with a corresponding release of cytidine 5-monophosphate (CMP). The polypeptide is 2-C-methyl-D-erythritol 2,4-cyclodiphosphate synthase (Mannheimia succiniciproducens (strain KCTC 0769BP / MBEL55E)).